A 468-amino-acid polypeptide reads, in one-letter code: 3-isopropylmalate dehydratase large subunit 2 (468 aa).

Residues C349, C409, and C412 each contribute to the [4Fe-4S] cluster site.

This sequence belongs to the aconitase/IPM isomerase family. LeuC type 1 subfamily. In terms of assembly, heterodimer of LeuC and LeuD. The cofactor is [4Fe-4S] cluster.

It carries out the reaction (2R,3S)-3-isopropylmalate = (2S)-2-isopropylmalate. Its pathway is amino-acid biosynthesis; L-leucine biosynthesis; L-leucine from 3-methyl-2-oxobutanoate: step 2/4. In terms of biological role, catalyzes the isomerization between 2-isopropylmalate and 3-isopropylmalate, via the formation of 2-isopropylmaleate. The sequence is that of 3-isopropylmalate dehydratase large subunit 2 from Bradyrhizobium diazoefficiens (strain JCM 10833 / BCRC 13528 / IAM 13628 / NBRC 14792 / USDA 110).